The sequence spans 147 residues: D-aminoacyl-tRNA deacylase (147 aa).

The Gly-cisPro motif, important for rejection of L-amino acids signature appears at 136-137; it reads GP.

The protein belongs to the DTD family. In terms of assembly, homodimer.

The protein resides in the cytoplasm. It carries out the reaction glycyl-tRNA(Ala) + H2O = tRNA(Ala) + glycine + H(+). The enzyme catalyses a D-aminoacyl-tRNA + H2O = a tRNA + a D-alpha-amino acid + H(+). In terms of biological role, an aminoacyl-tRNA editing enzyme that deacylates mischarged D-aminoacyl-tRNAs. Also deacylates mischarged glycyl-tRNA(Ala), protecting cells against glycine mischarging by AlaRS. Acts via tRNA-based rather than protein-based catalysis; rejects L-amino acids rather than detecting D-amino acids in the active site. By recycling D-aminoacyl-tRNA to D-amino acids and free tRNA molecules, this enzyme counteracts the toxicity associated with the formation of D-aminoacyl-tRNA entities in vivo and helps enforce protein L-homochirality. This Streptococcus agalactiae serotype Ia (strain ATCC 27591 / A909 / CDC SS700) protein is D-aminoacyl-tRNA deacylase.